The primary structure comprises 291 residues: Phosphatidylglycerol--prolipoprotein diacylglyceryl transferase (291 aa).

7 helical membrane-spanning segments follow: residues 21-41, 60-80, 96-116, 130-150, 198-218, 225-245, and 260-280; these read VSLH…MWLA, LLYA…VLFY, WDGG…MIIF, FIAP…FING, SQLY…NLFI, GSVS…VEFF, and ISMG…MMVW. Residue arginine 143 coordinates a 1,2-diacyl-sn-glycero-3-phospho-(1'-sn-glycerol).

It belongs to the Lgt family.

The protein resides in the cell inner membrane. It carries out the reaction L-cysteinyl-[prolipoprotein] + a 1,2-diacyl-sn-glycero-3-phospho-(1'-sn-glycerol) = an S-1,2-diacyl-sn-glyceryl-L-cysteinyl-[prolipoprotein] + sn-glycerol 1-phosphate + H(+). It functions in the pathway protein modification; lipoprotein biosynthesis (diacylglyceryl transfer). Catalyzes the transfer of the diacylglyceryl group from phosphatidylglycerol to the sulfhydryl group of the N-terminal cysteine of a prolipoprotein, the first step in the formation of mature lipoproteins. The sequence is that of Phosphatidylglycerol--prolipoprotein diacylglyceryl transferase from Klebsiella pneumoniae (strain 342).